The chain runs to 268 residues: uncharacterized protein (268 aa).

The HTH iclR-type domain maps to 15–77 (NQALIRGLRL…NAAGSYRLTI (63 aa)). A DNA-binding region (H-T-H motif) is located at residues 37-56 (LAKLAELANLNKSTAHRLLQ). Residues 92–265 (IIHVASPYLE…AEQISLELGY (174 aa)) form the IclR-ED domain.

This is an uncharacterized protein from Haemophilus influenzae (strain ATCC 51907 / DSM 11121 / KW20 / Rd).